The primary structure comprises 517 residues: Synaptic vesicular amine transporter (517 aa).

Over M1 to K20 the chain is Cytoplasmic. Residues L21–V41 traverse the membrane as a helical segment. The Extracellular segment spans residues P42–V132. N-linked (GlcNAc...) asparagine glycans are attached at residues N56, N83, N84, N91, and N113. The disordered stretch occupies residues E100–D119. Low complexity predominate over residues T105–T115. C120 and C327 form a disulfide bridge. The helical transmembrane segment at Q133–G153 threads the bilayer. Residues L154–P162 are Cytoplasmic-facing. A helical transmembrane segment spans residues I163 to S183. At S184 to R192 the chain is on the extracellular side. A helical transmembrane segment spans residues S193–V213. At Y214–N222 the chain is on the cytoplasmic side. A helical transmembrane segment spans residues A223–L245. Serotonin is bound by residues L231 and V235. The Extracellular portion of the chain corresponds to Y246–K251. The helical transmembrane segment at T252–Q274 threads the bilayer. At P275 to D294 the chain is on the cytoplasmic side. A helical membrane pass occupies residues P295–L314. Residues N308, I311, E315, F337, and Y344 each coordinate serotonin. Topologically, residues E315–W331 are extracellular. The chain crosses the membrane as a helical span at residues Q332–A355. Residues H356–R360 are Cytoplasmic-facing. The helical transmembrane segment at W361–A381 threads the bilayer. The Extracellular segment spans residues K382–F392. The chain crosses the membrane as a helical span at residues G393 to V413. D402 provides a ligand contact to serotonin. Residues D414 to H417 are Cytoplasmic-facing. A helical transmembrane segment spans residues V418–I438. A serotonin-binding site is contributed by Y436. Residues G439 to G443 lie on the Extracellular side of the membrane. A helical transmembrane segment spans residues G444 to V465. At F466–D517 the chain is on the cytoplasmic side. 2 positions are modified to phosphoserine; by CK2: S514 and S516.

It belongs to the major facilitator superfamily. Vesicular transporter family. In terms of assembly, interacts with SLC6A3. As to expression, expressed in striata and substantia nigra.

Its subcellular location is the cytoplasmic vesicle. It is found in the secretory vesicle. The protein resides in the synaptic vesicle membrane. The protein localises to the secretory vesicle membrane. It localises to the cell projection. Its subcellular location is the axon. It is found in the dendrite. It carries out the reaction serotonin(in) + 2 H(+)(out) = serotonin(out) + 2 H(+)(in). It catalyses the reaction dopamine(in) + 2 H(+)(out) = dopamine(out) + 2 H(+)(in). The catalysed reaction is histamine(in) + 2 H(+)(out) = histamine(out) + 2 H(+)(in). Strongly inhibited by reserpine and tetrabenazine. Also inhibited to a lesser extent by ketanserin and fenfluramine. Reserpine and ketanserin inhibit by blocking the substrate-binding pocket. Tetrabenazine traps SLC18A2/VMAT2 in an occluded conformation and its inhibition is specific to SLC18A2/VMAT2 but not SLC18A1/VMAT1. Its function is as follows. Electrogenic antiporter that exchanges one cationic monoamine with two intravesicular protons across the membrane of secretory and synaptic vesicles. Uses the electrochemical proton gradient established by the V-type proton-pump ATPase to accumulate high concentrations of monoamines inside the vesicles prior to their release via exocytosis. Transports a variety of catecholamines such as dopamine, adrenaline and noradrenaline, histamine, and indolamines such as serotonin. Regulates the transvesicular monoaminergic gradient that determines the quantal size. Mediates somatodendritic dopamine release in hippocampal neurons, likely as part of a regulated secretory pathway that integrates retrograde synaptic signals. Acts as a primary transporter for striatal dopamine loading ensuring impulse-dependent release of dopamine at the synaptic cleft. Responsible for histamine and serotonin storage and subsequent corelease from mast cell granules. This is Synaptic vesicular amine transporter (Slc18a2) from Mus musculus (Mouse).